A 458-amino-acid chain; its full sequence is Ectonucleotide pyrophosphatase/phosphodiesterase family member 7 (458 aa).

Positions 1–21 (MRGPAVLLTVALATLLAPGAG) are cleaved as a signal peptide. At 22-433 (APVQSQGSQN…RPTLLPKGRS (412 aa)) the chain is on the extracellular side. Residues Asp39 and Thr75 each coordinate Zn(2+). The required for enzyme activity stretch occupies residues 72-78 (VTMTSPC). Catalysis depends on Thr75, which acts as the Nucleophile. Substrate is bound at residue Asn96. N-linked (GlcNAc...) asparagine glycosylation is found at Asn100, Asn121, Asn146, and Asn168. Zn(2+) contacts are provided by Asp199, His203, Asp246, and His247. N-linked (GlcNAc...) asparagine glycosylation occurs at Asn267. His353 is a binding site for Zn(2+). A helical transmembrane segment spans residues 434–454 (ALPPSSRPLLVMGLLGTVILL). The Cytoplasmic segment spans residues 455-458 (SEVA).

It belongs to the nucleotide pyrophosphatase/phosphodiesterase family. Zn(2+) serves as cofactor. Post-translationally, N-glycosylated; required for activity and transport to the plasma membrane. As to expression, detected in the colon (at protein level). Expressed in the duodenum, jejunum and liver and at low levels in the ileum. Expression was very low in the esophagus, stomach and colon.

It is found in the cell membrane. The catalysed reaction is a sphingomyelin + H2O = phosphocholine + an N-acylsphing-4-enine + H(+). It catalyses the reaction 1-hexadecanoyl-sn-glycero-3-phosphocholine + H2O = 1-hexadecanoyl-sn-glycerol + phosphocholine + H(+). The enzyme catalyses a 1-O-alkyl-2-acetyl-sn-glycero-3-phosphocholine + H2O = a 1-O-alkyl-2-acetyl-sn-glycerol + phosphocholine + H(+). It carries out the reaction 1-O-octadecyl-2-acetyl-sn-glycero-3-phosphocholine + H2O = 1-O-octadecyl-2-acetyl-sn-glycerol + phosphocholine + H(+). With respect to regulation, inhibited in a dose dependent manner by ATP, imidazole, orthovanadate and zinc ion. Not inhibited by ADP, AMP and EDTA. Choline-specific phosphodiesterase that hydrolyzes sphingomyelin releasing the ceramide and phosphocholine and therefore is involved in sphingomyelin digestion, ceramide formation, and fatty acid (FA) absorption in the gastrointestinal tract. Also has phospholipase C activity and can also cleave phosphocholine from palmitoyl lyso-phosphatidylcholine and platelet-activating factor (PAF) leading to its inactivation. Does not have nucleotide pyrophosphatase activity. May promote cholesterol absorption by affecting the levels of sphingomyelin derived from either diet or endogenous sources, in the intestinal lumen. This is Ectonucleotide pyrophosphatase/phosphodiesterase family member 7 from Homo sapiens (Human).